The sequence spans 146 residues: Ferric uptake regulation protein 2 (146 aa).

Zn(2+) is bound by residues Cys-96 and Cys-99.

It belongs to the Fur family.

It is found in the cytoplasm. Acts as a global negative controlling element, employing Fe(2+) as a cofactor to bind the operator of the repressed genes. The sequence is that of Ferric uptake regulation protein 2 (fur2) from Mycolicibacterium fortuitum (Mycobacterium fortuitum).